The chain runs to 658 residues: Carnitine O-palmitoyltransferase 2, mitochondrial (658 aa).

A mitochondrion-targeting transit peptide spans 1-25 (MMPRLLFRAWPRCPSLVLGAPSRPL). Topologically, residues 26 to 178 (SAVSGPDDYL…GLLEPEVFHL (153 aa)) are mitochondrial matrix. Residues lysine 69 and lysine 85 each carry the N6-succinyllysine modification. The segment at residues 179–208 (NPSKSDTDAFKRLIRFVPPSLSWYGAYLVN) is an intramembrane region (note=Mitochondrial inner membrane). The Mitochondrial matrix segment spans residues 209–658 (AYPLDMSQYF…DALEGKAIKT (450 aa)). Residue lysine 239 is modified to N6-acetyllysine; alternate. Position 239 is an N6-succinyllysine; alternate (lysine 239). Lysine 305 carries the N6-acetyllysine modification. Histidine 372 functions as the Proton acceptor in the catalytic mechanism. N6-succinyllysine is present on residues lysine 424 and lysine 439. 452–464 (GKEFLKKKQLSPD) contributes to the CoA binding site. The (R)-carnitine site is built by tyrosine 486, serine 488, and threonine 499. Residues lysine 510 and lysine 544 each carry the N6-acetyllysine; alternate modification. Residues lysine 510 and lysine 544 each carry the N6-succinyllysine; alternate modification.

The protein belongs to the carnitine/choline acetyltransferase family.

The protein resides in the mitochondrion inner membrane. It carries out the reaction (R)-carnitine + hexadecanoyl-CoA = O-hexadecanoyl-(R)-carnitine + CoA. The enzyme catalyses octanoyl-CoA + (R)-carnitine = O-octanoyl-(R)-carnitine + CoA. It catalyses the reaction decanoyl-CoA + (R)-carnitine = O-decanoyl-(R)-carnitine + CoA. The catalysed reaction is dodecanoyl-CoA + (R)-carnitine = O-dodecanoyl-R-carnitine + CoA. It carries out the reaction tetradecanoyl-CoA + (R)-carnitine = O-tetradecanoyl-(R)-carnitine + CoA. The enzyme catalyses (R)-carnitine + octadecanoyl-CoA = O-octadecanoyl-(R)-carnitine + CoA. It catalyses the reaction eicosanoyl-CoA + (R)-carnitine = O-eicosanoyl-(R)-carnitine + CoA. The catalysed reaction is (9Z)-tetradecenoyl-CoA + (R)-carnitine = O-(9Z)-tetradecenoyl-(R)-carnitine + CoA. It carries out the reaction (5Z)-tetradecenoyl-CoA + (R)-carnitine = O-(5Z)-tetradecenoyl-(R)-carnitine + CoA. The enzyme catalyses (R)-carnitine + (9Z)-octadecenoyl-CoA = O-(9Z)-octadecenoyl-(R)-carnitine + CoA. It catalyses the reaction 4,8-dimethylnonanoyl-CoA + (R)-carnitine = O-4,8-dimethylnonanoyl-(R)-carnitine + CoA. Its pathway is lipid metabolism; fatty acid beta-oxidation. Its function is as follows. Involved in the intramitochondrial synthesis of acylcarnitines from accumulated acyl-CoA metabolites. Reconverts acylcarnitines back into the respective acyl-CoA esters that can then undergo beta-oxidation, an essential step for the mitochondrial uptake of long-chain fatty acids and their subsequent beta-oxidation in the mitochondrion. Active with medium (C8-C12) and long-chain (C14-C18) acyl-CoA esters. The protein is Carnitine O-palmitoyltransferase 2, mitochondrial of Rattus norvegicus (Rat).